The following is a 104-amino-acid chain: Pyrimidine/purine nucleoside phosphorylase (104 aa).

The protein belongs to the nucleoside phosphorylase PpnP family.

It carries out the reaction a purine D-ribonucleoside + phosphate = a purine nucleobase + alpha-D-ribose 1-phosphate. It catalyses the reaction adenosine + phosphate = alpha-D-ribose 1-phosphate + adenine. The catalysed reaction is cytidine + phosphate = cytosine + alpha-D-ribose 1-phosphate. The enzyme catalyses guanosine + phosphate = alpha-D-ribose 1-phosphate + guanine. It carries out the reaction inosine + phosphate = alpha-D-ribose 1-phosphate + hypoxanthine. It catalyses the reaction thymidine + phosphate = 2-deoxy-alpha-D-ribose 1-phosphate + thymine. The catalysed reaction is uridine + phosphate = alpha-D-ribose 1-phosphate + uracil. The enzyme catalyses xanthosine + phosphate = alpha-D-ribose 1-phosphate + xanthine. Catalyzes the phosphorolysis of diverse nucleosides, yielding D-ribose 1-phosphate and the respective free bases. Can use uridine, adenosine, guanosine, cytidine, thymidine, inosine and xanthosine as substrates. Also catalyzes the reverse reactions. In Leptospira borgpetersenii serovar Hardjo-bovis (strain L550), this protein is Pyrimidine/purine nucleoside phosphorylase.